We begin with the raw amino-acid sequence, 340 residues long: Phenylalanine--tRNA ligase alpha subunit (340 aa).

E255 is a binding site for Mg(2+).

It belongs to the class-II aminoacyl-tRNA synthetase family. Phe-tRNA synthetase alpha subunit type 1 subfamily. Tetramer of two alpha and two beta subunits. Requires Mg(2+) as cofactor.

The protein localises to the cytoplasm. It catalyses the reaction tRNA(Phe) + L-phenylalanine + ATP = L-phenylalanyl-tRNA(Phe) + AMP + diphosphate + H(+). This chain is Phenylalanine--tRNA ligase alpha subunit, found in Moorella thermoacetica (strain ATCC 39073 / JCM 9320).